The following is a 120-amino-acid chain: Chaperonin GroEL (120 aa).

ATP is bound at residue 23–27 (DGTTT).

Belongs to the chaperonin (HSP60) family. In terms of assembly, forms a cylinder of 14 subunits composed of two heptameric rings stacked back-to-back. Interacts with the co-chaperonin GroES.

Its subcellular location is the cytoplasm. The enzyme catalyses ATP + H2O + a folded polypeptide = ADP + phosphate + an unfolded polypeptide.. Its function is as follows. Together with its co-chaperonin GroES, plays an essential role in assisting protein folding. The GroEL-GroES system forms a nano-cage that allows encapsulation of the non-native substrate proteins and provides a physical environment optimized to promote and accelerate protein folding. The protein is Chaperonin GroEL of Mycolicibacterium pulveris (Mycobacterium pulveris).